The sequence spans 351 residues: Protein RecA (351 aa).

ATP is bound at residue glycine 68–threonine 75.

It belongs to the RecA family.

Its subcellular location is the cytoplasm. Functionally, can catalyze the hydrolysis of ATP in the presence of single-stranded DNA, the ATP-dependent uptake of single-stranded DNA by duplex DNA, and the ATP-dependent hybridization of homologous single-stranded DNAs. It interacts with LexA causing its activation and leading to its autocatalytic cleavage. This Thermotoga neapolitana (strain ATCC 49049 / DSM 4359 / NBRC 107923 / NS-E) protein is Protein RecA.